Here is a 176-residue protein sequence, read N- to C-terminus: Ribosome maturation factor RimM (176 aa).

In terms of domain architecture, PRC barrel spans 93–166; that stretch reads ADEYYHADLI…QVVIEPPNEI (74 aa).

It belongs to the RimM family. As to quaternary structure, binds ribosomal protein uS19.

It is found in the cytoplasm. Its function is as follows. An accessory protein needed during the final step in the assembly of 30S ribosomal subunit, possibly for assembly of the head region. Essential for efficient processing of 16S rRNA. May be needed both before and after RbfA during the maturation of 16S rRNA. It has affinity for free ribosomal 30S subunits but not for 70S ribosomes. This Rhodopseudomonas palustris (strain ATCC BAA-98 / CGA009) protein is Ribosome maturation factor RimM.